Here is an 83-residue protein sequence, read N- to C-terminus: Heterin-1 (83 aa).

A signal peptide spans 1–22 (MNGKLLLVSLMVTMLVMQPAEA). The propeptide occupies 66 to 83 (VAGQIPFDEFMDILHYRP).

It belongs to the non-disulfide-bridged peptide (NDBP) superfamily. Long chain multifunctional peptide (group 2) family. Expressed by the venom gland.

It localises to the secreted. Its subcellular location is the target cell membrane. Amphipathic peptide with potent activities against both Gram-positive and Gram-negative bacteria. Is the most active against the two Gram-positive Bacillus megaterium and Micrococcus luteus (MIC=4.0 uM for both). It has relatively low hemolytic activity against human erythrocytes. The polypeptide is Heterin-1 (Heterometrus spinifer (Asia giant forest scorpion)).